Here is a 241-residue protein sequence, read N- to C-terminus: Thiamine import ATP-binding protein ThiQ (241 aa).

The ABC transporter domain maps to 2-239 (IQLDKLNHCY…PKDEVLIQYL (238 aa)). 41-48 (GPSGAGKS) contacts ATP.

It belongs to the ABC transporter superfamily. Thiamine importer (TC 3.A.1.19.1) family. In terms of assembly, the complex is composed of two ATP-binding proteins (ThiQ), two transmembrane proteins (ThiP) and a solute-binding protein (ThiB).

The protein resides in the cell inner membrane. It carries out the reaction thiamine(out) + ATP + H2O = thiamine(in) + ADP + phosphate + H(+). In terms of biological role, part of the ABC transporter complex ThiBPQ involved in thiamine import. Responsible for energy coupling to the transport system. This is Thiamine import ATP-binding protein ThiQ from Photobacterium profundum (strain SS9).